We begin with the raw amino-acid sequence, 203 residues long: Glycerol-3-phosphate acyltransferase (203 aa).

Transmembrane regions (helical) follow at residues 13–33 (TLACLVFGYLLGSIPFGLILT), 62–82 (LAAATLLFDALKGTAAAAIAS), 88–108 (AGIAAGFAAFLGHLFPVWLSF), 118–138 (IGVLLGLMPVMVLLFAAIWLA), and 159–179 (IALYAAGNGKVAGLFAVMTAI).

The protein belongs to the PlsY family. In terms of assembly, probably interacts with PlsX.

It localises to the cell inner membrane. It carries out the reaction an acyl phosphate + sn-glycerol 3-phosphate = a 1-acyl-sn-glycero-3-phosphate + phosphate. Its pathway is lipid metabolism; phospholipid metabolism. Its function is as follows. Catalyzes the transfer of an acyl group from acyl-phosphate (acyl-PO(4)) to glycerol-3-phosphate (G3P) to form lysophosphatidic acid (LPA). This enzyme utilizes acyl-phosphate as fatty acyl donor, but not acyl-CoA or acyl-ACP. This chain is Glycerol-3-phosphate acyltransferase, found in Rhizobium meliloti (strain 1021) (Ensifer meliloti).